The following is a 116-amino-acid chain: NADH-ubiquinone oxidoreductase chain 3 (116 aa).

3 helical membrane-spanning segments follow: residues leucine 3–phenylalanine 23, phenylalanine 56–leucine 76, and leucine 87–tryptophan 107.

Belongs to the complex I subunit 3 family.

The protein resides in the mitochondrion membrane. The catalysed reaction is a ubiquinone + NADH + 5 H(+)(in) = a ubiquinol + NAD(+) + 4 H(+)(out). Core subunit of the mitochondrial membrane respiratory chain NADH dehydrogenase (Complex I) that is believed to belong to the minimal assembly required for catalysis. Complex I functions in the transfer of electrons from NADH to the respiratory chain. The immediate electron acceptor for the enzyme is believed to be ubiquinone. This Oncorhynchus tshawytscha (Chinook salmon) protein is NADH-ubiquinone oxidoreductase chain 3 (MT-ND3).